The chain runs to 111 residues: Ghrelin (111 aa).

An N-terminal signal peptide occupies residues 1 to 26 (MRQMKRTAYIILLVCVLALWMDSVQA). A compositionally biased stretch (polar residues) spans 28–37 (SSFLSPSQRP). The disordered stretch occupies residues 28 to 53 (SSFLSPSQRPQGKDKKPPRVGRRDSD). The O-decanoyl serine; alternate moiety is linked to residue serine 29. Residue serine 29 is the site of O-hexanoyl serine; alternate attachment. The O-octanoyl serine; alternate moiety is linked to residue serine 29. The span at 38 to 53 (QGKDKKPPRVGRRDSD) shows a compositional bias: basic and acidic residues. A Valine amide modification is found at valine 47. A propeptide spans 51–111 (DSDGILDLFM…DLLMDTPAKE (61 aa)) (removed in mature form).

Belongs to the motilin family. In terms of processing, O-octanoylated by GOAT/MBOAT4. O-octanoylation or O-decanoylation is essential for activity. The O-decanoylated form ghrelin-21-C10 differs in the length of the carbon backbone of the carboxylic acid forming an ester bond with Ser-29. 44% of eel ghrelin is O-decanoylated. Highest levels in stomach and anterior intestine. Lower levels in posterior intestine, kidney and brain. Low levels in heart, head kidney and middle intestine.

It localises to the secreted. Ligand for growth hormone secretagogue receptor type 1 (GHSR). Induces the release of growth hormone from the pituitary. Has an appetite-stimulating effect, induces adiposity and stimulates gastric acid secretion. Involved in growth regulation. The chain is Ghrelin (ghrl) from Anguilla japonica (Japanese eel).